The following is a 256-amino-acid chain: Short chain dehydrogenase adrF (256 aa).

6 residues coordinate NADP(+): Ile-11, Asp-57, Arg-119, Tyr-151, Lys-155, and Val-184. Catalysis depends on Tyr-151, which acts as the Proton acceptor. Lys-155 (lowers pKa of active site Tyr) is an active-site residue.

The protein belongs to the short-chain dehydrogenases/reductases (SDR) family.

It participates in secondary metabolite biosynthesis; terpenoid biosynthesis. Its function is as follows. Short chain dehydrogenase; part of the gene cluster that mediates the biosynthesis of andrastins, meroterpenoid compounds that exhibit inhibitory activity against ras farnesyltransferase, suggesting that they could be promising leads for antitumor agents. The first step of the pathway is the synthesis of 3,5-dimethylorsellinic acid (DMOA) by the polyketide synthase adrD via condensation of one acetyl-CoA starter unit with 3 malonyl-CoA units and 2 methylations. DMAO is then converted to farnesyl-DMAO by the prenyltransferase adrG. The methyltransferase adrK catalyzes the methylation of the carboxyl group of farnesyl-DMAO to farnesyl-DMAO methyl ester which is further converted to epoxyfarnesyl-DMAO methyl ester by the FAD-dependent monooxygenase adrH. The terpene cyclase adrI then catalyzes the carbon skeletal rearrangement to generate the andrastin E, the first compound in the pathway having the andrastin scaffold, with the tetracyclic ring system. The post-cyclization tailoring enzymes adrF, adrE, adrJ, and adrA, are involved in the conversion of andrastin E into andrastin A. The short chain dehydrogenase adrF is responsible for the oxidation of the C-3 a hydroxyl group of andrastin E to yield the corresponding ketone, andrastin D. The ketoreductase adrE stereoselectively reduces the carbonyl moiety to reverse the stereochemistry of the C-3 position to yield andrastin F. The acetyltransferase adrJ is the acetyltransferase that attaches the acetyl group to the C-3 hydroxyl group of andrastin F to yield andrastin C. Finally, the cytochrome P450 monooxygenase adrA catalyzes two sequential oxidation reactions of the C-23 methyl group, to generate the corresponding alcohol andrastin B, and aldehyde andrastin A. The protein is Short chain dehydrogenase adrF of Penicillium roqueforti.